A 191-amino-acid chain; its full sequence is Decorin-binding protein A (191 aa).

An N-terminal signal peptide occupies residues 1–29; sequence MIKCNNKTFNNLLKLTILVNLLISCGLTG.

The protein belongs to the decorin-binding protein family.

Functionally, binds to decorin which may mediate the adherence of B.burgdorferi to collagen fibers in skin and other tissues. This is Decorin-binding protein A (dbpA) from Borreliella burgdorferi (strain ATCC 35210 / DSM 4680 / CIP 102532 / B31) (Borrelia burgdorferi).